Reading from the N-terminus, the 240-residue chain is Protein unc-119 homolog A (240 aa).

Gly residues predominate over residues 1–12; that stretch reads MKVKKGGGGTGP. The disordered stretch occupies residues 1–62; that stretch reads MKVKKGGGGT…PLQGKQPIGP (62 aa). Phosphoserine; by CK2 occurs at positions 37, 39, and 41. Y131 serves as a coordination point for tetradecanoate.

This sequence belongs to the PDE6D/unc-119 family. As to quaternary structure, interacts with CABP4; in the absence of calcium. May interact with GTP-bound ARL1. Interacts with ARL2 and ARL3 (GTP-bound forms); this promotes the release of myristoylated cargo proteins. Found in a complex with ARL3, RP2 and UNC119; RP2 induces hydrolysis of GTP ARL3 in the complex, leading to the release of UNC119. Interacts with NPHP3 (when myristoylated). Interacts with CYS1 (when myristoylated). Interacts with MACIR; interaction only takes place when UNC119 is not liganded with myristoylated proteins. Interacts with ARL1 and ARL3 GTP-bound forms. Interacts with ARL2. Interacts with ARL2. Interacts with LCK; this interaction plays a crucial role in activation of LCK. Interacts with FYN. Interacts with RAB11A; in a cell cycle-dependent manner. Interacts with LYN (via SH2 and SH3 domains); leading to LYN activation. Interacts with DNM1; leading to a decrease of DNM1 GTPase activity. Found in a complex with ABL1, ABL2, CRK and UNC119; leading to the inhibition of CRK phosphorylation by ABL kinases. Interacts with CD44. Interacts with KLHL18 (via kelch repeats). Interacts with PPP3CA, PPP3CB and PPP3CC. Interacts with USP48; this interaction promotes UNC119 stability. In terms of processing, phosphorylation suppresses its interaction with KLHL18 and down-regulates its KLHL18-mediated degradation. Phosphorylated more under light conditions than dark conditions. Dephosphorylated by calcineurin.

Its subcellular location is the cytoplasm. It is found in the cytoskeleton. It localises to the microtubule organizing center. The protein resides in the centrosome. The protein localises to the spindle. Its subcellular location is the spindle pole. Its function is as follows. Involved in synaptic functions in photoreceptor cells, the signal transduction in immune cells as a Src family kinase activator, endosome recycling, the uptake of bacteria and endocytosis, protein trafficking in sensory neurons and as lipid-binding chaperone with specificity for a diverse subset of myristoylated proteins. Specifically binds the myristoyl moiety of a subset of N-terminally myristoylated proteins and is required for their localization. Binds myristoylated GNAT1 and is required for G-protein localization and trafficking in sensory neurons. Probably plays a role in trafficking proteins in photoreceptor cells. Plays important roles in mediating Src family kinase signals for the completion of cytokinesis via RAB11A. In Rattus norvegicus (Rat), this protein is Protein unc-119 homolog A (Unc119).